Reading from the N-terminus, the 974-residue chain is GATOR2 complex protein WDR59 (974 aa).

7 WD repeats span residues 57-98, 103-143, 146-185, 189-229, 232-276, 278-318, and 319-362; these read QSKW…GEVG, GHTR…KPTV, SAVA…TAVE, AHLS…KYLN, PCQV…TPVH, FVGH…RVDS, and QMQR…TASH. The tract at residues 350-374 is disordered; sequence HTEDTDHQHTASHGEEEALKEDPPR. In terms of domain architecture, RWD spans 393 to 494; it reads QEFSLINVQI…RQLVSCLESF (102 aa). Ser564 carries the phosphoserine modification. The stretch at 668-706 is one WD 8 repeat; it reads LNVNDIQETCQKNAASALLVGRKDLVQVWSLATVATDLC. Ser821, Ser822, and Ser830 each carry phosphoserine. Positions 831–852 are disordered; that stretch reads LTYSDPRERERDQHDKNKRLLD. Basic and acidic residues predominate over residues 835 to 851; it reads DPRERERDQHDKNKRLL. Residues 901–920 form a C4-type zinc finger; the sequence is YCSHCRSEVRGTQCAICKGF. 13 residues coordinate Zn(2+): Cys902, Cys905, Cys914, Cys917, Cys927, Cys938, His943, His946, His949, Cys960, Cys964, Cys966, and Cys968. The RING-type; atypical zinc-finger motif lies at 921-973; sequence TFQCAICHVAVRGSSNFCLTCGHGGHTSHMMEWFRTQEVCPTGCGCHCLLEST.

The protein belongs to the WD repeat WDR59 family. As to quaternary structure, component of the GATOR2 subcomplex, composed of MIOS, SEC13, SEH1L, WDR24 and WDR59. The GATOR2 complex interacts with CASTOR1 and CASTOR2; the interaction is negatively regulated by arginine. The GATOR2 complex interacts with SESN1, SESN2 and SESN3; the interaction is negatively regulated by amino acids. Interacts with DDB1-CUL4A/B E3 ligase complexes.

The protein localises to the lysosome membrane. Its activity is regulated as follows. The GATOR2 complex is negatively regulated by the upstream amino acid sensors CASTOR1 and SESN2, which sequester the GATOR2 complex in absence of amino acids. In the presence of abundant amino acids, GATOR2 is released from CASTOR1 and SESN2 and activated. In terms of biological role, as a component of the GATOR2 complex, functions as an activator of the amino acid-sensing branch of the mTORC1 signaling pathway. The GATOR2 complex indirectly activates mTORC1 through the inhibition of the GATOR1 subcomplex. GATOR2 probably acts as an E3 ubiquitin-protein ligase toward GATOR1. In the presence of abundant amino acids, the GATOR2 complex mediates ubiquitination of the NPRL2 core component of the GATOR1 complex, leading to GATOR1 inactivation. In the absence of amino acids, GATOR2 is inhibited, activating the GATOR1 complex. The chain is GATOR2 complex protein WDR59 from Homo sapiens (Human).